Here is a 259-residue protein sequence, read N- to C-terminus: Virion protein US10 homolog (259 aa).

The segment at Cys-162 to Cys-174 is a zinc-finger region.

The protein belongs to the herpesviridae US10 family. Phosphorylated.

It localises to the virion tegument. The protein resides in the host nucleus matrix. This Equine herpesvirus 4 (strain 1942) (EHV-4) protein is Virion protein US10 homolog.